Here is a 307-residue protein sequence, read N- to C-terminus: Ventral anterior homeobox 2 (307 aa).

3 disordered regions span residues M1–L70, R155–E175, and P197–R254. The segment covering C25–V38 has biased composition (basic and acidic residues). The span at S46–S62 shows a compositional bias: low complexity. The homeobox DNA-binding region spans P103–Q162. The span at K159–S170 shows a compositional bias: basic and acidic residues. The segment covering L202 to T249 has biased composition (low complexity).

The protein belongs to the EMX homeobox family. In terms of tissue distribution, expressed in the anterior neural keel and later in the preoptic area, optic stalk and ventral retina.

It is found in the nucleus. Its function is as follows. Transcription factor that may function in dorsoventral specification of the forebrain. Required for closure of the choroid fissure and together with vax1 is required for optic nerve differentiation and to limit retinal development to the optic cup. This Danio rerio (Zebrafish) protein is Ventral anterior homeobox 2 (vax2).